The primary structure comprises 156 residues: Longistatin (156 aa).

Positions 1 to 21 (MTHRRLLWALCVAALLGVVAA) are cleaved as a signal peptide. EF-hand domains are found at residues 70–105 (SQDE…TNHH) and 123–156 (DIAS…TNQI). The Ca(2+) site is built by Asp-83, Asp-85, Asn-87, Lys-89, Glu-94, Asp-135, Asn-137, Asp-139, Phe-141, and Glu-146.

Interacts with host fibrin. Interacts with human RAGE/AGER. As to expression, saliva (at protein level). Salivary gland (at protein level). Not detected in midgut, ovary, trachea, Malpighian tubule system, synganglion and cuticle.

Its subcellular location is the secreted. The protein resides in the cytoplasm. With respect to regulation, resistant to inhibition by host SERPINE1. Inhibited by PMSF, aprotinin, antipain and leupeptin. Inhibited by Zn(2+). Functionally, anticoagulant and fibrinolytic protease that modulates blood feeding of ticks on vertebrate hosts. Degrades host fibrinogen and delays fibrin clot formation. Promotes lysis of fibrin clots in the host by activating host plasminogen in the presence of soluble fibrin. Binds Ca(2+). Hydrolyzes serine protease-specific substrates. Required for the formation of a blood pool, an accumulation of blood and tissue fluid developed at the tick's feeding site. Blocks activation of host AGER/RAGE. Reduces AGER/RAGE-dependent production of reactive oxygen species (ROS) in human endothelial cells. Prevents AGER/RAGE-dependent activation of NF-kappa-B and suppresses expression of adhesion molecules, such as VCAM1, ICAM1 and SELE, and secretion of cytokines, such as CSF3/GCSF and TGF-beta, in human endothelial cells. Suppresses RAGE/AGER-mediated migration of mouse peritoneal resident cells. Reduces AGER/RAGE-mediated inflammation in mice tissues. The chain is Longistatin from Haemaphysalis longicornis (Bush tick).